The following is a 222-amino-acid chain: Latexin (222 aa).

Residues 1–97 enclose the Cystatin LXN-type 1 domain; it reads MEIPPTHYAA…NFTFEGEIGK (97 aa). Lys-55 bears the N6-acetyllysine mark. The interval 98–117 is alpha-helical linker; that stretch reads NPDEEDNTFYQSLMSLKRPL. Residues 118 to 222 form the Cystatin LXN-type 2 domain; the sequence is EAQDIPDNFG…SRLPKEGQAE (105 aa).

This sequence belongs to the protease inhibitor I47 (latexin) family. As to expression, highly enriched in macrophages.

The protein resides in the cytoplasm. Its function is as follows. Hardly reversible, non-competitive, and potent inhibitor of CPA1, CPA2 and CPA4. May play a role in inflammation. In Mus musculus (Mouse), this protein is Latexin (Lxn).